The primary structure comprises 109 residues: Ribonuclease P protein component (109 aa).

Belongs to the RnpA family. Consists of a catalytic RNA component (M1 or rnpB) and a protein subunit.

It catalyses the reaction Endonucleolytic cleavage of RNA, removing 5'-extranucleotides from tRNA precursor.. Its function is as follows. RNaseP catalyzes the removal of the 5'-leader sequence from pre-tRNA to produce the mature 5'-terminus. It can also cleave other RNA substrates such as 4.5S RNA. The protein component plays an auxiliary but essential role in vivo by binding to the 5'-leader sequence and broadening the substrate specificity of the ribozyme. In Mycoplasma capricolum subsp. capricolum (strain California kid / ATCC 27343 / NCTC 10154), this protein is Ribonuclease P protein component.